A 499-amino-acid polypeptide reads, in one-letter code: Protein flp (499 aa).

The next 4 helical transmembrane spans lie at 6-26, 389-409, 433-453, and 471-491; these read LYFL…IYIT, FNIV…FSAY, LTLC…YLIL, and LTLT…LLIL.

It localises to the cell membrane. In terms of biological role, its precise function is unknown. Has no penicillin-binding activity and is not involved in methicillin resistance. The chain is Protein flp (flp) from Staphylococcus aureus (strain MRSA252).